We begin with the raw amino-acid sequence, 63 residues long: Small ribosomal subunit protein eS17 (63 aa).

Belongs to the eukaryotic ribosomal protein eS17 family.

The chain is Small ribosomal subunit protein eS17 from Methanococcus maripaludis (strain DSM 14266 / JCM 13030 / NBRC 101832 / S2 / LL).